Consider the following 297-residue polypeptide: Internalin C (297 aa).

The first 34 residues, M1 to A34, serve as a signal peptide directing secretion. 6 LRR repeats span residues L74–F96, T97–K120, E122–S139, A140–L161, K162–S184, and L186–K207.

Belongs to the internalin family. Interacts in vitro with human intestinal mucin-2 (MUC2) but not with mucin-1; binding is slightly better at pH 5.5, (the pH of the intestine) than at pH 7.4. Interacts with the SH3 6 domain of human DNMBP (Tuba). Interacts with I-kappa-B kinase alpha (IKKA, CHUK).

The protein localises to the secreted. It localises to the host cytoplasm. Its function is as follows. A virulence enhancer that has at least 2 dissociable functions in infection; it impairs translocation of host transcription factor NF-kappa-B to the nucleus and antagonizes the function of the Tuba dynamin-binding protein, promoting bacterial spreading. Perturbs the morphology of host cell junctions by impairing host DNMBP (Tuba) and WASL interaction, altering cortical tension at the cell junctions and allowing bacteria to more efficiently form bacteria-filled cell protrusions which promote bacterial spreading within infected host tissue. Down-regulates the host inflammation response usually induced by Listeria infection. Interacts with host I-kappa-B kinase alpha (IKKA, CHUK), which prevents IKKA from phosphorylating NF-kappa-B inhibitor alpha (IKBA, NFKBIA) and thus delays degradation of phospho-IKBA. Translocation of host transcription factor p65 (a subunit of NF-kappa-B, RELA) into the nucleus is impaired, which prevents activation of NF-KB-regulated genes. Recognized by serum from healthy humans exposed to L.monocytogenes as well from patients who have recovered from listeriosis. The polypeptide is Internalin C (Listeria monocytogenes serotype 1/2a (strain EGD / Mackaness)).